Reading from the N-terminus, the 443-residue chain is Phenylalanine--tRNA ligase alpha subunit (443 aa).

Residues threonine 332, 375–377 (QVE), and tyrosine 415 each bind L-phenylalanine. Glutamate 417 lines the Mg(2+) pocket. Phenylalanine 441 contributes to the L-phenylalanine binding site.

It belongs to the class-II aminoacyl-tRNA synthetase family. Phe-tRNA synthetase alpha subunit type 2 subfamily. In terms of assembly, heterotetramer; dimer of two heterodimers formed by FARSA and FARSB. It depends on Mg(2+) as a cofactor.

It is found in the cytoplasm. It carries out the reaction tRNA(Phe) + L-phenylalanine + ATP = L-phenylalanyl-tRNA(Phe) + AMP + diphosphate + H(+). The sequence is that of Phenylalanine--tRNA ligase alpha subunit (FARSA) from Gallus gallus (Chicken).